Consider the following 65-residue polypeptide: Large ribosomal subunit protein bL35 (65 aa).

Residues Met-1–Thr-15 show a composition bias toward basic residues. Residues Met-1–Ala-27 are disordered.

The protein belongs to the bacterial ribosomal protein bL35 family.

This Cupriavidus pinatubonensis (strain JMP 134 / LMG 1197) (Cupriavidus necator (strain JMP 134)) protein is Large ribosomal subunit protein bL35.